The following is a 211-amino-acid chain: Large ribosomal subunit protein uL4 (211 aa).

Residues 50-77 (STLTKGEVSGGGKKPYKQKHTGKARQGS) are disordered. Over residues 63–72 (KPYKQKHTGK) the composition is skewed to basic residues.

Belongs to the universal ribosomal protein uL4 family. Part of the 50S ribosomal subunit.

In terms of biological role, one of the primary rRNA binding proteins, this protein initially binds near the 5'-end of the 23S rRNA. It is important during the early stages of 50S assembly. It makes multiple contacts with different domains of the 23S rRNA in the assembled 50S subunit and ribosome. Forms part of the polypeptide exit tunnel. This chain is Large ribosomal subunit protein uL4, found in Mycoplasma genitalium (strain ATCC 33530 / DSM 19775 / NCTC 10195 / G37) (Mycoplasmoides genitalium).